A 212-amino-acid chain; its full sequence is Peptide methionine sulfoxide reductase MsrA (212 aa).

C52 is a catalytic residue.

It belongs to the MsrA Met sulfoxide reductase family.

The catalysed reaction is L-methionyl-[protein] + [thioredoxin]-disulfide + H2O = L-methionyl-(S)-S-oxide-[protein] + [thioredoxin]-dithiol. It catalyses the reaction [thioredoxin]-disulfide + L-methionine + H2O = L-methionine (S)-S-oxide + [thioredoxin]-dithiol. In terms of biological role, has an important function as a repair enzyme for proteins that have been inactivated by oxidation. Catalyzes the reversible oxidation-reduction of methionine sulfoxide in proteins to methionine. In Salmonella newport (strain SL254), this protein is Peptide methionine sulfoxide reductase MsrA.